The following is a 332-amino-acid chain: Anthranilate phosphoribosyltransferase (332 aa).

5-phospho-alpha-D-ribose 1-diphosphate-binding positions include G80, 83 to 84 (GD), T88, 90 to 93 (NLST), 108 to 116 (KHGNRSASG), and S120. An anthranilate-binding site is contributed by G80. S92 contacts Mg(2+). Anthranilate is bound at residue N111. R166 provides a ligand contact to anthranilate. D224 and E225 together coordinate Mg(2+).

Belongs to the anthranilate phosphoribosyltransferase family. Homodimer. Mg(2+) is required as a cofactor.

The enzyme catalyses N-(5-phospho-beta-D-ribosyl)anthranilate + diphosphate = 5-phospho-alpha-D-ribose 1-diphosphate + anthranilate. The protein operates within amino-acid biosynthesis; L-tryptophan biosynthesis; L-tryptophan from chorismate: step 2/5. In terms of biological role, catalyzes the transfer of the phosphoribosyl group of 5-phosphorylribose-1-pyrophosphate (PRPP) to anthranilate to yield N-(5'-phosphoribosyl)-anthranilate (PRA). The sequence is that of Anthranilate phosphoribosyltransferase from Pyrobaculum calidifontis (strain DSM 21063 / JCM 11548 / VA1).